A 600-amino-acid polypeptide reads, in one-letter code: Putative acetyltransferase MPN_114 (600 aa).

Residue histidine 323 is the Proton acceptor of the active site. 396 to 409 (TKPLIKAKGIKNSE) is a binding site for CoA.

It belongs to the carnitine/choline acetyltransferase family.

This Mycoplasma pneumoniae (strain ATCC 29342 / M129 / Subtype 1) (Mycoplasmoides pneumoniae) protein is Putative acetyltransferase MPN_114.